The chain runs to 251 residues: Ditrans,polycis-undecaprenyl-diphosphate synthase ((2E,6E)-farnesyl-diphosphate specific) (251 aa).

Aspartate 21 is a catalytic residue. Aspartate 21 serves as a coordination point for Mg(2+). Residues 22-25 (GNNR), tryptophan 26, histidine 38, and 66-68 (SSE) contribute to the substrate site. Asparagine 69 functions as the Proton acceptor in the catalytic mechanism. Residues tryptophan 70, arginine 72, arginine 189, and 195 to 197 (RIS) contribute to the substrate site. Glutamate 208 serves as a coordination point for Mg(2+).

Belongs to the UPP synthase family. In terms of assembly, homodimer. The cofactor is Mg(2+).

The catalysed reaction is 8 isopentenyl diphosphate + (2E,6E)-farnesyl diphosphate = di-trans,octa-cis-undecaprenyl diphosphate + 8 diphosphate. Its function is as follows. Catalyzes the sequential condensation of isopentenyl diphosphate (IPP) with (2E,6E)-farnesyl diphosphate (E,E-FPP) to yield (2Z,6Z,10Z,14Z,18Z,22Z,26Z,30Z,34E,38E)-undecaprenyl diphosphate (di-trans,octa-cis-UPP). UPP is the precursor of glycosyl carrier lipid in the biosynthesis of bacterial cell wall polysaccharide components such as peptidoglycan and lipopolysaccharide. This chain is Ditrans,polycis-undecaprenyl-diphosphate synthase ((2E,6E)-farnesyl-diphosphate specific), found in Pseudomonas putida (strain ATCC 47054 / DSM 6125 / CFBP 8728 / NCIMB 11950 / KT2440).